A 361-amino-acid chain; its full sequence is Peptide chain release factor 1 (361 aa).

Residue glutamine 235 is modified to N5-methylglutamine. Residues 287–309 form a disordered region; sequence QKEASAMRSAQVGSGDRSERIRT.

This sequence belongs to the prokaryotic/mitochondrial release factor family. Methylated by PrmC. Methylation increases the termination efficiency of RF1.

It localises to the cytoplasm. Functionally, peptide chain release factor 1 directs the termination of translation in response to the peptide chain termination codons UAG and UAA. The sequence is that of Peptide chain release factor 1 from Chlamydia caviae (strain ATCC VR-813 / DSM 19441 / 03DC25 / GPIC) (Chlamydophila caviae).